The chain runs to 418 residues: D-amino acid dehydrogenase (418 aa).

Residue V3–W17 coordinates FAD.

Belongs to the DadA oxidoreductase family. FAD serves as cofactor.

The enzyme catalyses a D-alpha-amino acid + A + H2O = a 2-oxocarboxylate + AH2 + NH4(+). It participates in amino-acid degradation; D-alanine degradation; NH(3) and pyruvate from D-alanine: step 1/1. Functionally, oxidative deamination of D-amino acids. The protein is D-amino acid dehydrogenase of Dechloromonas aromatica (strain RCB).